The primary structure comprises 555 residues: Esterase-5A (555 aa).

The first 19 residues, 1–19 (MHLVRWLICLIQLWIQLGA), serve as a signal peptide directing secretion. An intrachain disulfide couples C87 to C106. N95 and N116 each carry an N-linked (GlcNAc...) asparagine glycan. Catalysis depends on S210, which acts as the Acyl-ester intermediate. The cysteines at positions 262 and 274 are disulfide-linked. N-linked (GlcNAc...) asparagine glycans are attached at residues N479 and N510. Cysteines 518 and 539 form a disulfide.

This sequence belongs to the type-B carboxylesterase/lipase family.

Its subcellular location is the secreted. The catalysed reaction is a carboxylic ester + H2O = an alcohol + a carboxylate + H(+). In Drosophila miranda (Fruit fly), this protein is Esterase-5A (Est-5A).